The primary structure comprises 562 residues: Arginine--tRNA ligase 1 (562 aa).

The 'HIGH' region motif lies at 122–132 (PNIAKPFSMGH).

Belongs to the class-I aminoacyl-tRNA synthetase family. As to quaternary structure, monomer.

The protein localises to the cytoplasm. The catalysed reaction is tRNA(Arg) + L-arginine + ATP = L-arginyl-tRNA(Arg) + AMP + diphosphate. The protein is Arginine--tRNA ligase 1 of Bacillus thuringiensis subsp. konkukian (strain 97-27).